The chain runs to 264 residues: Glutamate racemase (264 aa).

Substrate is bound by residues 10–11 and 42–43; these read DS and YG. Cys-73 acts as the Proton donor/acceptor in catalysis. Residue 74 to 75 coordinates substrate; the sequence is NT. Cys-181 functions as the Proton donor/acceptor in the catalytic mechanism. Residue 182–183 coordinates substrate; sequence TH.

It belongs to the aspartate/glutamate racemases family.

It catalyses the reaction L-glutamate = D-glutamate. It participates in cell wall biogenesis; peptidoglycan biosynthesis. Provides the (R)-glutamate required for cell wall biosynthesis. The chain is Glutamate racemase from Thermoanaerobacter pseudethanolicus (strain ATCC 33223 / 39E) (Clostridium thermohydrosulfuricum).